The chain runs to 423 residues: MEATAASTSLPDPGDFDRNVPRICGVCGDRATGFHFNAMTCEGCKGFFRRSMKRKALFTCPFNGDCRITKDNRRHCQACRLKRCVDIGMMKEFILTDEEVQRKREMIMKRKEEEALKDSLRPKLSEEQQHIIAILLDAHHKTYDPTYADFRDFRPPVRMDGSTGSYSPRPTLSFSGNSSSSSSDLYTTSLDMMEPSGFSNLDLNGEDSDDPSVTLDLSPLSMLPHLADLVSYSIQKVIGFAKMIPGFRDLTSDDQIVLLKSSAIEVIMLRSNQSFTMDDMSWDCGSQDYKYDVTDVSKAGHTLELIEPLIKFQVGLKKLNLHEEEHVLLMAICIVSPDRPGVQDAKLVEAIQDRLSNTLQTYIRCRHPPPGSHQLYAKMIQKLADLRSLNEEHSKQYRSLSFQPENSMKLTPLVLEVFGNEIS.

The Zn(2+) site is built by Cys-24, Cys-27, Cys-41, Cys-44, Cys-60, Cys-66, Cys-76, and Cys-79. NR C4-type zinc fingers lie at residues 24–44 (CGVC…CEGC) and 60–84 (CPFN…LKRC). Positions 24–89 (CGVCGDRATG…RLKRCVDIGM (66 aa)) form a DNA-binding region, nuclear receptor. Positions 97-126 (DEEVQRKREMIMKRKEEEALKDSLRPKLSE) are hinge. In terms of domain architecture, NR LBD spans 127-419 (EQQHIIAILL…LTPLVLEVFG (293 aa)). Tyr-143 provides a ligand contact to calcitriol. Residues 159–180 (MDGSTGSYSPRPTLSFSGNSSS) are disordered. Low complexity predominate over residues 171-180 (TLSFSGNSSS). Ser-233 provides a ligand contact to calcitriol. The interval 242–260 (KMIPGFRDLTSDDQIVLLK) is interaction with coactivator LXXLL motif. The calcitriol site is built by Arg-270, Ser-274, His-301, and His-393. The 9aaTAD signature appears at 412-420 (PLVLEVFGN).

Belongs to the nuclear hormone receptor family. NR1 subfamily. Homodimer in the absence of bound vitamin D3. Heterodimer with RXRA after vitamin D3 binding. Interacts with MED1 and NCOA6. Interacts with MED1, NCOA1, NCOA2, NCOA3 and NCOA6 coactivators, leading to a strong increase of transcription of target genes. Interacts with the corepressor NCOR1. Interacts with SNW1. Interacts with IRX4, the interaction does not affect its transactivation activity. Interacts with CRY1. Interacts with CRY2 in a ligand-dependent manner. Ubiquitinated by UBR5, leading to its degradation: UBR5 specifically recognizes and binds ligand-bound VDR when it is not associated with coactivators (NCOAs). In presence of NCOAs, the UBR5-degron is not accessible, preventing its ubiquitination and degradation. In terms of tissue distribution, detected in intestine and kidney.

The protein resides in the nucleus. Its subcellular location is the cytoplasm. Functionally, nuclear receptor for calcitriol, the active form of vitamin D3 which mediates the action of this vitamin on cells. Enters the nucleus upon vitamin D3 binding where it forms heterodimers with the retinoid X receptor/RXR. The VDR-RXR heterodimers bind to specific response elements on DNA and activate the transcription of vitamin D3-responsive target genes. Plays a central role in calcium homeostasis. Also functions as a receptor for the secondary bile acid lithocholic acid (LCA) and its metabolites. The chain is Vitamin D3 receptor (Vdr) from Rattus norvegicus (Rat).